Consider the following 88-residue polypeptide: Small cysteine-rich outer membrane protein OmcA (88 aa).

The N-terminal stretch at 1–18 (MKKTALLAALCSVVSLSS) is a signal peptide. Cysteine 19 carries the N-palmitoyl cysteine lipid modification. A lipid anchor (S-diacylglycerol cysteine) is attached at cysteine 19.

As to quaternary structure, part of a disulfide cross-linked outer membrane complex (COMC) composed of the major outer membrane porin (MOMP), the small cysteine-rich protein (OmcA) and the large cysteine-rich periplasmic protein (OmcB).

The protein localises to the cell outer membrane. Its function is as follows. In elementary bodies (EBs, the infectious stage, which is able to survive outside the host cell) provides the structural integrity of the outer envelope through disulfide cross-links with the large cysteine-rich periplasmic protein and the major outer membrane porin. It has been described in publications as the Sarkosyl-insoluble COMC (Chlamydia outer membrane complex), and serves as the functional equivalent of peptidoglycan. This Chlamydia trachomatis serovar B (strain Jali20/OT) protein is Small cysteine-rich outer membrane protein OmcA (omcA).